The sequence spans 677 residues: Transketolase 1 (677 aa).

Substrate is bound at residue H27. Thiamine diphosphate is bound by residues H66 and 114 to 116 (GPL). Residue D155 participates in Mg(2+) binding. 2 residues coordinate thiamine diphosphate: G156 and N185. Mg(2+) contacts are provided by N185 and I187. Substrate-binding residues include H261, R356, and S383. H261 contributes to the thiamine diphosphate binding site. Thiamine diphosphate-binding residues include E415 and F442. The active-site Proton donor is the E415. Residues H466, D474, and R525 each coordinate substrate.

Belongs to the transketolase family. Homodimer. Requires Mg(2+) as cofactor. The cofactor is Ca(2+). Mn(2+) is required as a cofactor. It depends on Co(2+) as a cofactor. Thiamine diphosphate serves as cofactor.

It carries out the reaction D-sedoheptulose 7-phosphate + D-glyceraldehyde 3-phosphate = aldehydo-D-ribose 5-phosphate + D-xylulose 5-phosphate. Functionally, catalyzes the transfer of a two-carbon ketol group from a ketose donor to an aldose acceptor, via a covalent intermediate with the cofactor thiamine pyrophosphate. This Candida albicans (Yeast) protein is Transketolase 1 (TKT1).